The chain runs to 1052 residues: Suppressor of RPS4-RLD 1 (1052 aa).

A2 bears the N-acetylalanine mark. TPR repeat units follow at residues 39–72 and 74–106; these read ILDICNRAFCYNQLELHKHVIKDCDKALLLEPFA and QAFILKGRALLALGRKQEAVLVLEQGYKSALQQ. Positions 107–136 form a coiled coil; it reads TADVKQLLELEELLKDARREIDGILKSHAT. Residues 131–181 form a disordered region; sequence LKSHATESPQETPAYHSEKSDEKSDKLDNHESGASSNGNSHESSSELGEQS. Positions 146-161 are enriched in basic and acidic residues; it reads HSEKSDEKSDKLDNHE. Positions 162-181 are enriched in low complexity; it reads SGASSNGNSHESSSELGEQS. 9 TPR repeats span residues 297-330, 331-364, 365-398, 400-432, 433-466, 468-500, 502-534, 535-567, and 569-591; these read VDFRLSRGIAQVNEGNYTKAISIFDKVLKEEPTY, PEALIGRGTAYAFQRELESAIADFTKAIQSNPAA, SEAWKRRGQARAALGEYVEAVEDLTKALVFEPNS, DVLHERGIVNFKSKDFTAAVKDLSICLKQEKDN, KSAYTYLGLAFASLGEYKKAEEAHLKSIQLDSNY, EAWLHLAQFYQELADHCKALECIEQVLQVDNRV, KAYHLRGLVFHGLGEHRKAIQELSIGLSIENTI, ECLYLRGSCYHAVGEYRDAVKDYDATVDVELDA, and EKFVLQCLAFYQKELALYTASKV. Residues 704 to 739 are disordered; it reads STKGTTKNGKKNRRRERTNILSQNRGGAGCSSSSFS. A helical transmembrane segment spans residues 966–986; it reads GTAVTGFVVLLGLLLAANMEF.

Multimer. Interacts with EDS1. Interacts with SNC1 and RPS4. Interacts (via TPR domain) with SGT1 (via TPR domain). Interacts with the TCP transcription factors TCP8, TCP14, TCP15, TCP20, TCP22 and TCP23. Ubiquitous. Not detected in very young flowers and older siliques.

It is found in the nucleus. Its subcellular location is the cytoplasm. The protein resides in the perinuclear region. It localises to the membrane. The protein localises to the microsome. In terms of biological role, negative regulator of effector-triggered immunity associated with the EDS1 resistance pathway. May localize its interactors to a microsomal membrane. May therefore negatively regulate RPS4 and SNC1 translocation to the nucleus. Contributes to the regulation of RPS2 and RPS4 protein levels and negatively regulates SNC1 stability. The polypeptide is Suppressor of RPS4-RLD 1 (Arabidopsis thaliana (Mouse-ear cress)).